Here is a 129-residue protein sequence, read N- to C-terminus: Small ribosomal subunit protein uS11 (129 aa).

This sequence belongs to the universal ribosomal protein uS11 family. In terms of assembly, part of the 30S ribosomal subunit. Interacts with proteins S7 and S18. Binds to IF-3.

Its function is as follows. Located on the platform of the 30S subunit, it bridges several disparate RNA helices of the 16S rRNA. Forms part of the Shine-Dalgarno cleft in the 70S ribosome. The chain is Small ribosomal subunit protein uS11 from Limosilactobacillus fermentum (strain NBRC 3956 / LMG 18251) (Lactobacillus fermentum).